Consider the following 211-residue polypeptide: Mitotic spindle assembly checkpoint protein MAD2B (211 aa).

An HORMA domain is found at 13-203 (QVVADVLCEF…SDILKMQLYV (191 aa)). Residues 21–155 (EFLEVAVHLI…FTVLVHTREA (135 aa)) form a mediates interaction with REV1 and REV3L and homodimerization region.

Homooligomer. Heterodimer with REV3L. This dimer forms the minimal DNA polymerase zeta complex (Pol-zeta2), with REV3L bearing DNA polymerase catalytic activity, although its activity is very low in this context. Component of the tetrameric Pol-zeta complex (Pol-zeta4), which consists of REV3L, MAD2L2, POLD2 and POLD3; Pol-zeta4 is the fully active form of DNA polymerase zeta. Component of the shieldin complex, consisting of SHLD1, SHLD2, SHLD3 and MAD2L2/REV7. Within the complex, SHLD2 forms a scaffold which interacts with a SHLD3-MAD2L2 subcomplex via its N-terminus, and with SHLD1 via its C-terminus. Interacts with REV1. Interacts with ADAM9. Interacts with CHAMP1. Interacts with FZR1 (in complex with the anaphase promoting complex APC). May interact with CDC20. Interacts with RAN. Interacts with ELK1; the interaction is direct and recruits MAD2L2 to ELK1-specific promoters. May interact with the JNK kinases MAPK8 and/or MAPK9 to stimulate ELK1 phosphorylation and transcriptional activity upon DNA damage. Interacts with TCF7L2; prevents its binding to promoters and negatively modulates its transcriptional activity. Interacts with YY1AP1. Interacts with PRCC; the interaction is direct. Interacts with POGZ. Interacts with ASTE1.

It is found in the nucleus. It localises to the cytoplasm. Its subcellular location is the cytoskeleton. The protein resides in the spindle. Functionally, adapter protein able to interact with different proteins and involved in different biological processes. Mediates the interaction between the error-prone DNA polymerase zeta catalytic subunit REV3L and the inserter polymerase REV1, thereby mediating the second polymerase switching in translesion DNA synthesis. Translesion DNA synthesis releases the replication blockade of replicative polymerases, stalled in presence of DNA lesions. Component of the shieldin complex, which plays an important role in repair of DNA double-stranded breaks (DSBs). During G1 and S phase of the cell cycle, the complex functions downstream of TP53BP1 to promote non-homologous end joining (NHEJ) and suppress DNA end resection. Mediates various NHEJ-dependent processes including immunoglobulin class-switch recombination, and fusion of unprotected telomeres. May also regulate another aspect of cellular response to DNA damage through regulation of the JNK-mediated phosphorylation and activation of the transcriptional activator ELK1. Inhibits the FZR1- and probably CDC20-mediated activation of the anaphase promoting complex APC thereby regulating progression through the cell cycle. Regulates TCF7L2-mediated gene transcription and may play a role in epithelial-mesenchymal transdifferentiation. The chain is Mitotic spindle assembly checkpoint protein MAD2B (MAD2L2) from Bos taurus (Bovine).